We begin with the raw amino-acid sequence, 476 residues long: MAKEQVQAITKMEEDFAQWYTDIVKKAELVDYSSVKGCMILRPYGYALWENMQKVMDEKLKATSHENVYMPMFIPESLLQKEKDHVEGFAPEVAWVTHGGDEKLAERLCVRPTSETLFCEHFSKIVQSYNDLPKLYNQWCSVVRWEKTTRPFLRTTEFLWQEGHTIHETAEESQAETLNILNLYASFCEDYLAIPVIKGQKTEKEKFAGAKATYTIESLMHDGKALQTGTSHNFGTNFSEAFDIKFLDRNGKWQYVHQTSWGVSTRMIGGLIMVHSDNNGLVMPPKVAPVQVVIVPIAQHKEGVLAKATELQGHIQKVARVKIDASNKTPGWKFNEYEMKGIPIRLEVGPKDIEKNQVVLVRRDTKEKEFISMDQLEERIPALLEEIHNSLFNKAKVFRDENTYSVTSFEEMKKVADEKQGFIKAMWCGELACEEKLKEEVGVSSRCMPFEQEHLAEECVCCGKEAKQMVYWGKAY.

Belongs to the class-II aminoacyl-tRNA synthetase family. ProS type 3 subfamily. In terms of assembly, homodimer.

It is found in the cytoplasm. The enzyme catalyses tRNA(Pro) + L-proline + ATP = L-prolyl-tRNA(Pro) + AMP + diphosphate. In terms of biological role, catalyzes the attachment of proline to tRNA(Pro) in a two-step reaction: proline is first activated by ATP to form Pro-AMP and then transferred to the acceptor end of tRNA(Pro). The chain is Proline--tRNA ligase 2 from Bacillus thuringiensis (strain Al Hakam).